A 484-amino-acid chain; its full sequence is Protein nucleotidyltransferase YdiU (484 aa).

Residues G81, G83, R84, K103, D115, G116, R166, and R173 each coordinate ATP. The active-site Proton acceptor is the D244. The Mg(2+) site is built by N245 and D254. An ATP-binding site is contributed by D254.

The protein belongs to the SELO family. It depends on Mg(2+) as a cofactor. The cofactor is Mn(2+).

The enzyme catalyses L-seryl-[protein] + ATP = 3-O-(5'-adenylyl)-L-seryl-[protein] + diphosphate. It carries out the reaction L-threonyl-[protein] + ATP = 3-O-(5'-adenylyl)-L-threonyl-[protein] + diphosphate. It catalyses the reaction L-tyrosyl-[protein] + ATP = O-(5'-adenylyl)-L-tyrosyl-[protein] + diphosphate. The catalysed reaction is L-histidyl-[protein] + UTP = N(tele)-(5'-uridylyl)-L-histidyl-[protein] + diphosphate. The enzyme catalyses L-seryl-[protein] + UTP = O-(5'-uridylyl)-L-seryl-[protein] + diphosphate. It carries out the reaction L-tyrosyl-[protein] + UTP = O-(5'-uridylyl)-L-tyrosyl-[protein] + diphosphate. Nucleotidyltransferase involved in the post-translational modification of proteins. It can catalyze the addition of adenosine monophosphate (AMP) or uridine monophosphate (UMP) to a protein, resulting in modifications known as AMPylation and UMPylation. This Shewanella baltica (strain OS223) protein is Protein nucleotidyltransferase YdiU.